The primary structure comprises 682 residues: Methionine synthase reductase (682 aa).

A Flavodoxin-like domain is found at 4–147 (FLIAFGSQTG…EVEPWIEKFF (144 aa)). Residue 93 to 124 (LLGLGDSNYSSYQTIPRKIDKQLTALGANRLF) coordinates FMN. The FAD-binding FR-type domain occupies 271 to 516 (TKPFEVLVVS…GKEPARFRLP (246 aa)). Position 293 (Lys-293) interacts with NADP(+). FAD contacts are provided by residues 455 to 458 (RPYS) and 488 to 491 (GLAT). NADP(+) contacts are provided by residues 607–609 (RVQ) and Asp-643. Trp-681 is a binding site for FAD.

The cofactor is FAD. Requires FMN as cofactor.

The enzyme catalyses 2 methylcob(III)alamin-[methionine synthase] + 2 S-adenosyl-L-homocysteine + NADP(+) + H(+) = 2 cob(II)alamin-[methionine synthase] + 2 S-adenosyl-L-methionine + NADPH. Functionally, involved in the reductive regeneration of cob(I)alamin cofactor required for the maintenance of methionine synthase in a functional state. In Caenorhabditis elegans, this protein is Methionine synthase reductase.